Consider the following 198-residue polypeptide: HTH-type transcriptional regulator BetI (198 aa).

One can recognise an HTH tetR-type domain in the interval 8-68 (KIRRPQLVSA…ETMRDILRQL (61 aa)). A DNA-binding region (H-T-H motif) is located at residues 31–50 (SVSLISQEAGVSSGIINHYF).

Its pathway is amine and polyamine biosynthesis; betaine biosynthesis via choline pathway [regulation]. Functionally, repressor involved in the biosynthesis of the osmoprotectant glycine betaine. It represses transcription of the choline transporter BetT and the genes of BetAB involved in the synthesis of glycine betaine. The protein is HTH-type transcriptional regulator BetI of Vibrio vulnificus (strain YJ016).